A 1154-amino-acid polypeptide reads, in one-letter code: BEACH domain-containing protein lvsF (1154 aa).

Disordered stretches follow at residues 92–123 (HLPT…EQPS) and 139–167 (TSKV…PTPT). The segment covering 145–158 (PTPPTPTPTPPTPQ) has biased composition (pro residues). Residues 289-384 (DMNERNILEL…TRNQVYDLLV (96 aa)) form the BEACH-type PH domain. Residues 389–697 (TNIMHINEQA…QIFKTPHPQR (309 aa)) form the BEACH domain. Disordered regions lie at residues 554 to 575 (SFES…NFEN), 739 to 762 (NNLN…LNNN), and 779 to 825 (NSLN…ENLN). Composition is skewed to low complexity over residues 779 to 788 (NSLNNENNEN) and 795 to 822 (NSNS…NENE). WD repeat units lie at residues 858–897 (LHKD…QIRS), 900–939 (LCNL…ISYS), 942–980 (GHSD…NGAI), 992–1031 (DSDT…LIRR), 1034–1074 (CFFD…FSFK), 1076–1110 (KGEI…EIKD), and 1119–1154 (SSNE…IWQQ).

The polypeptide is BEACH domain-containing protein lvsF (lvsF) (Dictyostelium discoideum (Social amoeba)).